The sequence spans 100 residues: Small ribosomal subunit protein uS14 (100 aa).

The protein belongs to the universal ribosomal protein uS14 family. As to quaternary structure, part of the 30S ribosomal subunit. Contacts proteins S3 and S10.

In terms of biological role, binds 16S rRNA, required for the assembly of 30S particles and may also be responsible for determining the conformation of the 16S rRNA at the A site. The sequence is that of Small ribosomal subunit protein uS14 from Prochlorococcus marinus (strain MIT 9313).